Reading from the N-terminus, the 158-residue chain is Cyclic pyranopterin monophosphate synthase (158 aa).

Substrate is bound by residues leucine 75 to histidine 77 and methionine 113 to glutamate 114. Aspartate 128 is an active-site residue.

This sequence belongs to the MoaC family. In terms of assembly, homohexamer; trimer of dimers.

It carries out the reaction (8S)-3',8-cyclo-7,8-dihydroguanosine 5'-triphosphate = cyclic pyranopterin phosphate + diphosphate. It functions in the pathway cofactor biosynthesis; molybdopterin biosynthesis. In terms of biological role, catalyzes the conversion of (8S)-3',8-cyclo-7,8-dihydroguanosine 5'-triphosphate to cyclic pyranopterin monophosphate (cPMP). The sequence is that of Cyclic pyranopterin monophosphate synthase from Polynucleobacter asymbioticus (strain DSM 18221 / CIP 109841 / QLW-P1DMWA-1) (Polynucleobacter necessarius subsp. asymbioticus).